A 382-amino-acid polypeptide reads, in one-letter code: C-type lectin domain-containing protein 38 (382 aa).

Residues 1 to 40 are Cytoplasmic-facing; the sequence is MAIFYDDPLERLNQPIKTKSYRKKQVVQRVHVFIFDNWKL. Residues 41–61 traverse the membrane as a helical segment; it reads ILLGILNLIFLIIAIVFAILF. Topologically, residues 62 to 382 are extracellular; that stretch reads FVGSADCAQL…FFLCKRAIDF (321 aa). Residues 97–116 form a disordered region; that stretch reads NAITTTQGTPSNKTSTTTPS. Over residues 100 to 116 the composition is skewed to low complexity; that stretch reads TTTQGTPSNKTSTTTPS. N108 and N189 each carry an N-linked (GlcNAc...) asparagine glycan. 2 consecutive C-type lectin domains span residues 129 to 250 and 264 to 377; these read VGTK…FVCE and YNKN…FLCK. 4 disulfides stabilise this stretch: C150-C249, C223-C241, C285-C376, and C348-C368.

Expressed in ventral cord motor neurons and PLM touch neurons.

The protein resides in the membrane. In terms of biological role, involved in negative modulation of unc-40-mediated axon outgrowth. Required for proper presynaptic development in axons that have reached their targets. May function in concert with E3 ubiquitin-protein ligase rpm-1 in regulating axon outgrowth. This chain is C-type lectin domain-containing protein 38, found in Caenorhabditis elegans.